We begin with the raw amino-acid sequence, 121 residues long: Large ribosomal subunit protein bL12 (121 aa).

It belongs to the bacterial ribosomal protein bL12 family. Homodimer. Part of the ribosomal stalk of the 50S ribosomal subunit. Forms a multimeric L10(L12)X complex, where L10 forms an elongated spine to which 2 to 4 L12 dimers bind in a sequential fashion. Binds GTP-bound translation factors.

In terms of biological role, forms part of the ribosomal stalk which helps the ribosome interact with GTP-bound translation factors. Is thus essential for accurate translation. The chain is Large ribosomal subunit protein bL12 from Shewanella pealeana (strain ATCC 700345 / ANG-SQ1).